Here is a 279-residue protein sequence, read N- to C-terminus: Probable endonuclease 4 (279 aa).

Zn(2+) is bound by residues histidine 69, histidine 109, glutamate 145, aspartate 179, histidine 182, histidine 216, aspartate 229, histidine 231, and glutamate 261.

This sequence belongs to the AP endonuclease 2 family. It depends on Zn(2+) as a cofactor.

It catalyses the reaction Endonucleolytic cleavage to 5'-phosphooligonucleotide end-products.. Endonuclease IV plays a role in DNA repair. It cleaves phosphodiester bonds at apurinic or apyrimidinic (AP) sites, generating a 3'-hydroxyl group and a 5'-terminal sugar phosphate. In Tolumonas auensis (strain DSM 9187 / NBRC 110442 / TA 4), this protein is Probable endonuclease 4.